Here is a 300-residue protein sequence, read N- to C-terminus: Acetaldehyde dehydrogenase 3 (300 aa).

11–14 (SGNI) serves as a coordination point for NAD(+). Catalysis depends on Cys-126, which acts as the Acyl-thioester intermediate. NAD(+) is bound by residues 157-165 (SAGPGTRAN) and Asn-276.

This sequence belongs to the acetaldehyde dehydrogenase family.

It catalyses the reaction acetaldehyde + NAD(+) + CoA = acetyl-CoA + NADH + H(+). The polypeptide is Acetaldehyde dehydrogenase 3 (hsaG) (Rhodococcus jostii (strain RHA1)).